The following is a 432-amino-acid chain: MNITFIGSGYVGLVSGIIMGYLGHNVTCLDNDEVKISKLNKQILPIYEAKLDEYLKQALESDRLKFTNIYNNELQNADAIFITVGTPSKGLGEADLKYVYDAIDKVFEHINKDCLIVIKSTVPPGSCSNIIAYLKSRGFSFNVASNPEFLREGSAVEDFLYPDRIVIGVNNKESEAILRKIYAPLQGVKFVVTDLVTSELIKYASNSFLATKIAFINEMADLCEKIGGNIKDLSKGVGLDQRIGQNFLNAGPGFGGSCFPKDILALNNLVENHHIDCRILKAVIKSNKQRPSNMVDKIATLLDGDLKGKNIAILGLTYKAGTDDVRASPAIAIVKILLNKDVYVKAFDPIGLENAKKNLEHKNLLYLDSAVDACKSVDIIVIATEWSEFKELNWQEIYDLVKSPIIIDFRNILDNETMKKIGFRYYAVGSKI.

NAD(+) contacts are provided by residues 2–19 (NITF…GIIM), Val-11, Asp-30, Lys-35, Thr-121, and Glu-152. Substrate contacts are provided by residues 148 to 152 (EFLRE), Lys-202, Asn-206, 247 to 251 (FLNAG), and Gly-255. Cys-258 functions as the Nucleophile in the catalytic mechanism. Residue Lys-261 coordinates NAD(+). Lys-319 contributes to the substrate binding site. Position 326 (Arg-326) interacts with NAD(+).

Belongs to the UDP-glucose/GDP-mannose dehydrogenase family.

It carries out the reaction UDP-alpha-D-glucose + 2 NAD(+) + H2O = UDP-alpha-D-glucuronate + 2 NADH + 3 H(+). It participates in nucleotide-sugar biosynthesis; UDP-alpha-D-glucuronate biosynthesis; UDP-alpha-D-glucuronate from UDP-alpha-D-glucose: step 1/1. The sequence is that of UDP-glucose 6-dehydrogenase (udg) from Rickettsia conorii (strain ATCC VR-613 / Malish 7).